We begin with the raw amino-acid sequence, 113 residues long: Large ribosomal subunit protein uL22 (113 aa).

The protein belongs to the universal ribosomal protein uL22 family. In terms of assembly, part of the 50S ribosomal subunit.

This protein binds specifically to 23S rRNA; its binding is stimulated by other ribosomal proteins, e.g. L4, L17, and L20. It is important during the early stages of 50S assembly. It makes multiple contacts with different domains of the 23S rRNA in the assembled 50S subunit and ribosome. Functionally, the globular domain of the protein is located near the polypeptide exit tunnel on the outside of the subunit, while an extended beta-hairpin is found that lines the wall of the exit tunnel in the center of the 70S ribosome. This Bacillus mycoides (strain KBAB4) (Bacillus weihenstephanensis) protein is Large ribosomal subunit protein uL22.